Consider the following 351-residue polypeptide: Beta-1,4-xylosyltransferase IRX9 (351 aa).

Over 1-16 (MGSLERSKKKAQVWKK) the chain is Cytoplasmic. Residues 17-36 (AVIHFSLCFVMGFFTGFAPA) traverse the membrane as a helical; Signal-anchor for type II membrane protein segment. Topologically, residues 37–351 (GKASFFSNFE…KFPTRTRLST (315 aa)) are lumenal. N-linked (GlcNAc...) asparagine glycans are attached at residues N64 and N74. The tract at residues 80–107 (SQSQAPAPAESREAEGETRSLSEKEDEN) is disordered. Over residues 89–107 (ESREAEGETRSLSEKEDEN) the composition is skewed to basic and acidic residues. N-linked (GlcNAc...) asparagine glycans are attached at residues N271 and N287.

This sequence belongs to the glycosyltransferase 43 family. Expressed in developing interfascicular fibers, primary and secondary xylem in stems and developing secondary xylem in roots.

It localises to the golgi apparatus membrane. The enzyme catalyses [(1-&gt;4)-beta-D-xylan](n) + UDP-alpha-D-xylose = [(1-&gt;4)-beta-D-xylan](n+1) + UDP + H(+). In terms of biological role, involved in the synthesis of the hemicellulose glucuronoxylan, a major component of secondary cell walls. Xylan xylosyltransferase that acts cooperatively with IRX14 to achieve the successive addition of xylosyl residues during xylan backbone elongation. This chain is Beta-1,4-xylosyltransferase IRX9, found in Arabidopsis thaliana (Mouse-ear cress).